The sequence spans 64 residues: Large ribosomal subunit protein bL28 (64 aa).

Residues 1-23 form a disordered region; the sequence is MARKDQISHRGPLSGNNRSHALN.

It belongs to the bacterial ribosomal protein bL28 family.

The chain is Large ribosomal subunit protein bL28 from Mesomycoplasma hyopneumoniae (strain 232) (Mycoplasma hyopneumoniae).